Reading from the N-terminus, the 320-residue chain is Olfactory receptor 51E2 (320 aa).

Residues 1 to 24 lie on the Extracellular side of the membrane; it reads MSSCNFTHATFMLIGIPGLEEAHF. A glycan (N-linked (GlcNAc...) asparagine) is linked at N5. The chain crosses the membrane as a helical span at residues 25 to 45; it reads WFGFPLLSMYAVALFGNCIVV. Residues 46 to 53 lie on the Cytoplasmic side of the membrane; that stretch reads FIVRTERS. A helical transmembrane segment spans residues 54 to 74; the sequence is LHAPMYLFLCMLAAIDLALST. The Extracellular segment spans residues 75 to 98; it reads STMPKILALFWFDSREITFDACLA. Residues C96 and C178 are joined by a disulfide bond. The chain crosses the membrane as a helical span at residues 99–119; it reads QMFFIHALSAIESTILLAMAF. Residues 120–138 are Cytoplasmic-facing; it reads DRYVAICHPLRHAAVLNNT. A helical transmembrane segment spans residues 139-159; that stretch reads VTVQIGMVALVRGSLFFFPLP. Residues 160 to 195 are Extracellular-facing; the sequence is LLIKRLAFCHSNVLSHSYCVHQDVMKLAYTDTLPNV. A helical membrane pass occupies residues 196–216; it reads VYGLTAILLVMGVDVMFISLS. The Cytoplasmic portion of the chain corresponds to 217-236; the sequence is YFLIIRAVLQLPSKSERAKA. Residues 237 to 257 traverse the membrane as a helical segment; the sequence is FGTCVSHIGVVLAFYVPLIGL. Topologically, residues 258 to 272 are extracellular; sequence SVVHRFGNSLDPIVH. The helical transmembrane segment at 273-293 threads the bilayer; the sequence is VLMGDVYLLLPPVINPIIYGA. Residues 294 to 320 lie on the Cytoplasmic side of the membrane; the sequence is KTKQIRTRVLAMFKISCDKDIEAGGNT.

This sequence belongs to the G-protein coupled receptor 1 family. In terms of tissue distribution, expressed in brain and liver. Expressed only in some areas of the brain and in the olfactory epithelium.

It is found in the cell membrane. The protein localises to the early endosome membrane. Olfactory receptor. The activity of this receptor is probably mediated by G-proteins which induce elevation of intracellular Ca(2+), cAMP and activation of phosphorylation of the protein kinases PKA and MAPK3/MAPK1. Activation of OR51E2 may affect melanocyte proliferation, differentiation, and melanogenesis and may increase proliferation and migration of primary retinal pigment epithelial (RPE) cells. Activated by the short chain fatty acids (SCFA), acetate and propionate. In response to SCFA, may positively regulate renin secretion and increase blood pressure. May also be activated by steroid hormones and regulate cell proliferation. Activated by L-lactate in glomus cells. This Rattus norvegicus (Rat) protein is Olfactory receptor 51E2 (Or51e2).